A 495-amino-acid chain; its full sequence is Putative aldehyde dehydrogenase AldA (495 aa).

212–218 (GKGSESG) lines the NAD(+) pocket. Residues Glu-256 and Cys-290 contribute to the active site.

Belongs to the aldehyde dehydrogenase family.

The enzyme catalyses an aldehyde + NAD(+) + H2O = a carboxylate + NADH + 2 H(+). This is Putative aldehyde dehydrogenase AldA (aldA) from Staphylococcus aureus (strain bovine RF122 / ET3-1).